The chain runs to 244 residues: tRNA (guanine-N(1)-)-methyltransferase (244 aa).

S-adenosyl-L-methionine-binding positions include G120 and 140–145 (IGDYIL).

The protein belongs to the RNA methyltransferase TrmD family. As to quaternary structure, homodimer.

The protein resides in the cytoplasm. The enzyme catalyses guanosine(37) in tRNA + S-adenosyl-L-methionine = N(1)-methylguanosine(37) in tRNA + S-adenosyl-L-homocysteine + H(+). Specifically methylates guanosine-37 in various tRNAs. This Brucella canis (strain ATCC 23365 / NCTC 10854 / RM-666) protein is tRNA (guanine-N(1)-)-methyltransferase.